The following is a 325-amino-acid chain: Beta-lactamase 1 (325 aa).

The signal sequence occupies residues 1–26 (MRIRPTRRLLLGAVAPLALVPLVACG). The disordered stretch occupies residues 30 to 50 (GSESGQQPGLGGCGTSAHGSA). The active-site Acyl-ester intermediate is the S93. Residue 270–272 (KSG) participates in substrate binding.

The protein belongs to the class-A beta-lactamase family.

The catalysed reaction is a beta-lactam + H2O = a substituted beta-amino acid. This Streptomyces cacaoi protein is Beta-lactamase 1 (blaL).